A 457-amino-acid polypeptide reads, in one-letter code: Ribosomal protein uS12 methylthiotransferase RimO (457 aa).

Residues 9–128 (KKVHFISLGC…ILKNSDEGEK (120 aa)) form the MTTase N-terminal domain. Residues C18, C54, C88, C163, C167, and C170 each coordinate [4Fe-4S] cluster. One can recognise a Radical SAM core domain in the interval 149–384 (SQPGHRAYLK…MEVQQNISRE (236 aa)). Residues 387–455 (SDFVGKTLQV…EYDLIGEIVV (69 aa)) enclose the TRAM domain.

Belongs to the methylthiotransferase family. RimO subfamily. The cofactor is [4Fe-4S] cluster.

It localises to the cytoplasm. It catalyses the reaction L-aspartate(89)-[ribosomal protein uS12]-hydrogen + (sulfur carrier)-SH + AH2 + 2 S-adenosyl-L-methionine = 3-methylsulfanyl-L-aspartate(89)-[ribosomal protein uS12]-hydrogen + (sulfur carrier)-H + 5'-deoxyadenosine + L-methionine + A + S-adenosyl-L-homocysteine + 2 H(+). Catalyzes the methylthiolation of an aspartic acid residue of ribosomal protein uS12. The chain is Ribosomal protein uS12 methylthiotransferase RimO from Bdellovibrio bacteriovorus (strain ATCC 15356 / DSM 50701 / NCIMB 9529 / HD100).